The sequence spans 701 residues: Meprin A subunit beta (701 aa).

Residues 1–22 form the signal peptide; sequence MDLWNLSWFLFLDALLVISGLA. Residues 23–61 constitute a propeptide that is removed on maturation; it reads TPENFDVDGGMDQDIFDINEGLGLDLFEGDIRLDRAQIR. Residues 23–652 are Extracellular-facing; that stretch reads TPENFDVDGG…CEKRGSTRDT (630 aa). The region spanning 62 to 256 is the Peptidase M12A domain; sequence NSIIGEKYRW…LKLNQLYNCS (195 aa). Intrachain disulfides connect Cys-103/Cys-255, Cys-124/Cys-144, and Cys-265/Cys-427. Residue His-152 participates in Zn(2+) binding. Glu-153 is an active-site residue. 2 residues coordinate Zn(2+): His-156 and His-162. N-linked (GlcNAc...) asparagine glycans are attached at residues Asn-218, Asn-254, Asn-370, Asn-421, Asn-436, Asn-445, Asn-547, and Asn-592. An MAM domain is found at 260-429; the sequence is SFMDSCSFEL…INLSETRCPH (170 aa). The 156-residue stretch at 430 to 585 folds into the MATH domain; the sequence is HIWHIRNFTQ…GDDVYILLTV (156 aa). Residue Ser-593 is glycosylated (O-linked (GalNAc...) serine). O-linked (GalNAc...) threonine glycosylation is found at Thr-594 and Thr-599. Residues 595–607 form a required for proteolytic processing region; the sequence is QIQLTPAPSVQDL. Ser-603 carries O-linked (GalNAc...) serine glycosylation. Residues 604–644 enclose the EGF-like domain; sequence VQDLCSKTTCKNDGVCTVRDGKAECRCQSGEDWWYMGERCE. Cystine bridges form between Cys-608–Cys-619, Cys-613–Cys-628, and Cys-630–Cys-643. Residues 653–673 form a helical membrane-spanning segment; the sequence is IVIAVSSTVAVFALMLIITLV. At 674–701 the chain is on the cytoplasmic side; the sequence is SVYCTRKKYRERMSSNRPNLTPQNQHAF. At Thr-694 the chain carries Phosphothreonine.

As to quaternary structure, homotetramer consisting of disulfide-linked beta subunits, or heterotetramer of two alpha and two beta subunits formed by non-covalent association of two disulfide-linked heterodimers. Interacts with MBL2 through its carbohydrate moiety. This interaction may inhibit its catalytic activity. Interacts with TSPAN8. Zn(2+) is required as a cofactor. Phosphorylated by PKC at multiple sites of its cytoplasmic part. Phosphorylation dcreases activity at the cell surface, leading to diminished substrate cleavage. Post-translationally, N-glycosylated; contains high mannose and/or complex biantennary structures. In terms of processing, O-glycosylation protect the C-terminal region from proteolytic cleavage and diminish secretion, this seems to be specific to human. Proteolytically activated by trypsin in the intestinal lumen and kallikrein-related peptidases in other tissues. The major site of expression is the brush border membrane of small intestinal and kidney epithelial cells.

It is found in the cell membrane. Its subcellular location is the secreted. It carries out the reaction Hydrolysis of proteins, including azocasein, and peptides. Hydrolysis of 5-His-|-Leu-6, 6-Leu-|-Cys-7, 14-Ala-|-Leu-15 and 19-Cys-|-Gly-20 bonds in insulin B chain.. Strongly inhibited by fetuin-A/AHSG. Membrane metallopeptidase that sheds many membrane-bound proteins. Exhibits a strong preference for acidic amino acids at the P1' position. Known substrates include: FGF19, VGFA, IL1B, IL18, procollagen I and III, E-cadherin, KLK7, gastrin, ADAM10, tenascin-C. The presence of several pro-inflammatory cytokine among substrates implicate MEP1B in inflammation. It is also involved in tissue remodeling due to its capability to degrade extracellular matrix components. Also cleaves the amyloid precursor protein/APP, thereby releasing neurotoxic amyloid beta peptides. This chain is Meprin A subunit beta (MEP1B), found in Homo sapiens (Human).